A 275-amino-acid polypeptide reads, in one-letter code: Glucosamine-6-phosphate deaminase 2 (275 aa).

D72 acts as the Proton acceptor; for enolization step in catalysis. Positions 103–131 (NAHILDGNASDLQAECEDFERKIKEAGGI) form a coiled coil. Residue D141 is the For ring-opening step of the active site. The active-site Proton acceptor; for ring-opening step is the H143. Residue E148 is the For ring-opening step of the active site.

It belongs to the glucosamine/galactosamine-6-phosphate isomerase family. Homohexamer.

The protein resides in the cytoplasm. The catalysed reaction is alpha-D-glucosamine 6-phosphate + H2O = beta-D-fructose 6-phosphate + NH4(+). Its function is as follows. Catalyzes the reversible conversion of alpha-D-glucosamine 6-phosphate (GlcN-6P) into beta-D-fructose 6-phosphate (Fru-6P) and ammonium ion, a regulatory reaction step in de novo uridine diphosphate-N-acetyl-alpha-D-glucosamine (UDP-GlcNAc) biosynthesis via hexosamine pathway. This is Glucosamine-6-phosphate deaminase 2 from Xenopus tropicalis (Western clawed frog).